Consider the following 239-residue polypeptide: Lactate utilization protein A 1 (239 aa).

Belongs to the LutA/YkgE family.

Is involved in L-lactate degradation and allows cells to grow with lactate as the sole carbon source. The sequence is that of Lactate utilization protein A 1 from Bacillus anthracis (strain A0248).